The primary structure comprises 329 residues: Phenylalanine--tRNA ligase alpha subunit (329 aa).

Glu-254 contacts Mg(2+).

Belongs to the class-II aminoacyl-tRNA synthetase family. Phe-tRNA synthetase alpha subunit type 1 subfamily. In terms of assembly, tetramer of two alpha and two beta subunits. Mg(2+) serves as cofactor.

Its subcellular location is the cytoplasm. The enzyme catalyses tRNA(Phe) + L-phenylalanine + ATP = L-phenylalanyl-tRNA(Phe) + AMP + diphosphate + H(+). In Haemophilus influenzae (strain PittEE), this protein is Phenylalanine--tRNA ligase alpha subunit.